We begin with the raw amino-acid sequence, 273 residues long: Large ribosomal subunit protein uL2cz/uL2cy (273 aa).

Disordered stretches follow at residues 1–27 and 225–273; these read MAKHLYKTPIPSTRKGTVDRQVKSNPR and PVDH…RRRK.

It belongs to the universal ribosomal protein uL2 family. In terms of assembly, part of the 50S ribosomal subunit.

Its subcellular location is the plastid. The protein resides in the chloroplast. The chain is Large ribosomal subunit protein uL2cz/uL2cy (rpl2-A) from Lolium perenne (Perennial ryegrass).